Reading from the N-terminus, the 371-residue chain is D-erythrose-4-phosphate dehydrogenase (371 aa).

12–13 (RI) contacts NAD(+). Substrate is bound by residues 154 to 156 (SCT), R200, 213 to 214 (TK), and R236. The active-site Nucleophile is C155. N318 serves as a coordination point for NAD(+).

The protein belongs to the glyceraldehyde-3-phosphate dehydrogenase family. Epd subfamily. In terms of assembly, homotetramer.

It localises to the cytoplasm. It catalyses the reaction D-erythrose 4-phosphate + NAD(+) + H2O = 4-phospho-D-erythronate + NADH + 2 H(+). It participates in cofactor biosynthesis; pyridoxine 5'-phosphate biosynthesis; pyridoxine 5'-phosphate from D-erythrose 4-phosphate: step 1/5. Functionally, catalyzes the NAD-dependent conversion of D-erythrose 4-phosphate to 4-phosphoerythronate. The sequence is that of D-erythrose-4-phosphate dehydrogenase from Psychromonas ingrahamii (strain DSM 17664 / CCUG 51855 / 37).